A 212-amino-acid polypeptide reads, in one-letter code: Pyridoxine/pyridoxamine 5'-phosphate oxidase 1 (212 aa).

Substrate contacts are provided by residues 8–11 and Lys-66; that span reads RTDY. Residues 61–66, 76–77, Lys-83, and Gln-105 each bind FMN; these read RIVLLK and FT. Substrate is bound by residues Tyr-123, Arg-127, and Ser-131. Residues 140-141 and Trp-184 contribute to the FMN site; that span reads QS. 190-192 is a binding site for substrate; that stretch reads RLH. Arg-194 contributes to the FMN binding site.

This sequence belongs to the pyridoxamine 5'-phosphate oxidase family. In terms of assembly, homodimer. FMN is required as a cofactor.

It catalyses the reaction pyridoxamine 5'-phosphate + O2 + H2O = pyridoxal 5'-phosphate + H2O2 + NH4(+). The catalysed reaction is pyridoxine 5'-phosphate + O2 = pyridoxal 5'-phosphate + H2O2. It participates in cofactor metabolism; pyridoxal 5'-phosphate salvage; pyridoxal 5'-phosphate from pyridoxamine 5'-phosphate: step 1/1. The protein operates within cofactor metabolism; pyridoxal 5'-phosphate salvage; pyridoxal 5'-phosphate from pyridoxine 5'-phosphate: step 1/1. Catalyzes the oxidation of either pyridoxine 5'-phosphate (PNP) or pyridoxamine 5'-phosphate (PMP) into pyridoxal 5'-phosphate (PLP). The protein is Pyridoxine/pyridoxamine 5'-phosphate oxidase 1 of Ralstonia nicotianae (strain ATCC BAA-1114 / GMI1000) (Ralstonia solanacearum).